Reading from the N-terminus, the 608-residue chain is Elongation factor 4 (608 aa).

Positions 11–193 constitute a tr-type G domain; sequence KKIRNFSIIA…QIVEKVPEPS (183 aa). GTP contacts are provided by residues 23 to 28 and 140 to 143; these read DHGKST and NKID.

It belongs to the TRAFAC class translation factor GTPase superfamily. Classic translation factor GTPase family. LepA subfamily.

It localises to the cell membrane. It catalyses the reaction GTP + H2O = GDP + phosphate + H(+). In terms of biological role, required for accurate and efficient protein synthesis under certain stress conditions. May act as a fidelity factor of the translation reaction, by catalyzing a one-codon backward translocation of tRNAs on improperly translocated ribosomes. Back-translocation proceeds from a post-translocation (POST) complex to a pre-translocation (PRE) complex, thus giving elongation factor G a second chance to translocate the tRNAs correctly. Binds to ribosomes in a GTP-dependent manner. In Listeria welshimeri serovar 6b (strain ATCC 35897 / DSM 20650 / CCUG 15529 / CIP 8149 / NCTC 11857 / SLCC 5334 / V8), this protein is Elongation factor 4.